Here is a 335-residue protein sequence, read N- to C-terminus: Ubiquinone biosynthesis protein COQ4, mitochondrial (335 aa).

The transit peptide at 1 to 10 directs the protein to the mitochondrion; that stretch reads MLRLSLLRST. Residues His-210, Asp-211, His-214, and Glu-226 each coordinate Zn(2+).

The protein belongs to the COQ4 family. As to quaternary structure, component of a multi-subunit COQ enzyme complex, composed of at least COQ3, COQ4, COQ5, COQ6, COQ7 and COQ9. Interacts with COQ3. Requires Zn(2+) as cofactor.

The protein localises to the mitochondrion inner membrane. The enzyme catalyses 4-hydroxy-3-methoxy-5-(all-trans-hexaprenyl)benzoate + H(+) = 2-methoxy-6-(all-trans-hexaprenyl)phenol + CO2. The protein operates within cofactor biosynthesis; ubiquinone biosynthesis. Its function is as follows. Lyase that catalyzes the C1-decarboxylation of 4-hydroxy-3-methoxy-5-(all-trans-hexaprenyl)benzoic acid into 2-methoxy-6-(all-trans-hexaprenyl)phenol during ubiquinone biosynthesis. May play a role in organizing a multi-subunit COQ enzyme complex required for coenzyme Q biosynthesis. Required for steady-state levels of COQ3, COQ4, COQ6, COQ7 and COQ9 polypeptides. In Saccharomyces cerevisiae (strain ATCC 204508 / S288c) (Baker's yeast), this protein is Ubiquinone biosynthesis protein COQ4, mitochondrial.